The chain runs to 268 residues: 3-methyl-2-oxobutanoate hydroxymethyltransferase (268 aa).

Residues Asp46 and Asp85 each contribute to the Mg(2+) site. Residues 46 to 47, Asp85, and Lys114 contribute to the 3-methyl-2-oxobutanoate site; that span reads DS. Glu116 is a binding site for Mg(2+). Glu183 serves as the catalytic Proton acceptor.

This sequence belongs to the PanB family. Homodecamer; pentamer of dimers. Mg(2+) is required as a cofactor.

The protein resides in the cytoplasm. It catalyses the reaction 3-methyl-2-oxobutanoate + (6R)-5,10-methylene-5,6,7,8-tetrahydrofolate + H2O = 2-dehydropantoate + (6S)-5,6,7,8-tetrahydrofolate. Its pathway is cofactor biosynthesis; coenzyme A biosynthesis. Catalyzes the reversible reaction in which hydroxymethyl group from 5,10-methylenetetrahydrofolate is transferred onto alpha-ketoisovalerate to form ketopantoate. The sequence is that of 3-methyl-2-oxobutanoate hydroxymethyltransferase from Sulfolobus acidocaldarius (strain ATCC 33909 / DSM 639 / JCM 8929 / NBRC 15157 / NCIMB 11770).